The sequence spans 88 residues: Protein MATERNALLY EXPRESSED GENE 1 (88 aa).

A signal peptide spans 1–27 (MEYKKRVDALVFFSLLLLGYFAAHAHG). The N-linked (GlcNAc...) asparagine glycan is linked to N36. 2 disulfide bridges follow: C65-C87 and C68-C76.

It belongs to the MEG family. Post-translationally, glycosylated. Expressed exclusively in endosperm. Found in basal endosperm transfer cells.

Its subcellular location is the secreted. The protein resides in the cell wall. It localises to the cell membrane. The protein localises to the extracellular space. It is found in the extracellular matrix. In terms of biological role, regulates maternal nutrient uptake, sucrose partitioning, and seed biomass yield. Necessary and sufficient for the establishment and differentiation of the endosperm nutrient transfer cells located at the mother:seed interface. Exclusive expression of the maternal allele at the early stages of endosperm development. The maternal allele is hypomethylated. At later stages, expression becomes biallelic. Regulated by the transcription factor MRP1. In Zea mays (Maize), this protein is Protein MATERNALLY EXPRESSED GENE 1 (MEG1).